A 459-amino-acid chain; its full sequence is Vanillin aminotransferase (459 aa).

Pyridoxal 5'-phosphate contacts are provided by residues Gly115–Ser116 and Asp255. Lys284 is subject to N6-(pyridoxal phosphate)lysine. Phe320–Thr321 contacts pyridoxal 5'-phosphate. A coiled-coil region spans residues Leu430–Gln457.

The protein belongs to the class-III pyridoxal-phosphate-dependent aminotransferase family. As to expression, confined to the placenta of green fruits at high levels. Barely detectable in the pericarp and seeds as well as in the placenta of mature fruits.

The enzyme catalyses vanillin + L-alanine = vanillylamine + pyruvate. Its pathway is aromatic compound metabolism; phenylpropanoid biosynthesis. Its function is as follows. Involved in the biosynthesis of capsaicinoids natural products, pungent alkaloids synthesized from phenylpropanoid intermediates in the placental tissue of chili pepper fruit acting as repellant on herbivorous mammals and conferring spiciness to hot peppers. Can transfer an amine from vanillylamine to pyruvate forming vanillin and L-alanine. The polypeptide is Vanillin aminotransferase (Capsicum annuum (Capsicum pepper)).